We begin with the raw amino-acid sequence, 204 residues long: Superoxide dismutase [Mn] (204 aa).

A Mn(2+)-binding site is contributed by His-27. 2 positions are modified to phosphothreonine: Thr-34 and Thr-70. Positions 82, 164, and 168 each coordinate Mn(2+).

This sequence belongs to the iron/manganese superoxide dismutase family. Homodimer. Mn(2+) serves as cofactor.

It carries out the reaction 2 superoxide + 2 H(+) = H2O2 + O2. Functionally, destroys superoxide anion radicals which are normally produced within the cells and which are toxic to biological systems. The chain is Superoxide dismutase [Mn] (sodA) from Bacillus caldotenax.